Reading from the N-terminus, the 689-residue chain is Calcium-responsive transcription factor (689 aa).

Disordered regions lie at residues 1–46 and 541–609; these read MEQR…PTIL and SPDG…SVPN. The span at 13–29 shows a compositional bias: basic and acidic residues; the sequence is DGEKSEREAQGFEHRTC. 2 stretches are compositionally biased toward polar residues: residues 541–559 and 578–601; these read SPDGSQALVSVDSHASSSP and LGQSQNPGTDTCLTQDNSTSSSTG.

Highly expressed in brain and testis.

The protein localises to the nucleus. Acts as a transcriptional activator that mediates the calcium- and neuron-selective induction of BDNF exon III transcription. Binds to the consensus calcium-response element CaRE1 5'-CTATTTCGAG-3' sequence. The sequence is that of Calcium-responsive transcription factor (Carf) from Mus musculus (Mouse).